The primary structure comprises 371 residues: Ecto-ADP-ribosyltransferase 3 (371 aa).

The signal sequence occupies residues 1-26; the sequence is MKMGHFEMVTTLLAAAVLMDIFQVKA. A disulfide bond links Cys-43 and Cys-255. A TR mART core domain is found at 64–250; sequence ALLRMVWDNA…LVLQSINSTC (187 aa). NAD(+) contacts are provided by Tyr-101 and Asn-182. A disordered region spans residues 306 to 346; that stretch reads VLQTEENPLLPDEKPDRSRGKANNPTPGLVPGPKSHPSASS. The GPI-anchor amidated serine moiety is linked to residue Ser-345. Residues 346 to 371 constitute a propeptide, removed in mature form; the sequence is SGNTLLPSVMASTILLVASAVNFIEL.

The protein belongs to the Arg-specific ADP-ribosyltransferase family.

It is found in the cell membrane. It carries out the reaction L-arginyl-[protein] + NAD(+) = N(omega)-(ADP-D-ribosyl)-L-arginyl-[protein] + nicotinamide + H(+). The polypeptide is Ecto-ADP-ribosyltransferase 3 (Art3) (Mus musculus (Mouse)).